A 429-amino-acid chain; its full sequence is Aspartate--tRNA(Asp/Asn) ligase (429 aa).

Glutamate 166 is an L-aspartate binding site. Residues 188–191 form an aspartate region; the sequence is QLYK. Arginine 210 contacts L-aspartate. Residues 210-212, 218-220, and glutamate 352 contribute to the ATP site; these read RAE and RHL. Mg(2+) contacts are provided by glutamate 352 and serine 355. Positions 355 and 359 each coordinate L-aspartate. An ATP-binding site is contributed by 400–403; that stretch reads GIER.

It belongs to the class-II aminoacyl-tRNA synthetase family. Type 2 subfamily. As to quaternary structure, homodimer. It depends on Mg(2+) as a cofactor.

The protein resides in the cytoplasm. It carries out the reaction tRNA(Asx) + L-aspartate + ATP = L-aspartyl-tRNA(Asx) + AMP + diphosphate. Functionally, aspartyl-tRNA synthetase with relaxed tRNA specificity since it is able to aspartylate not only its cognate tRNA(Asp) but also tRNA(Asn). Reaction proceeds in two steps: L-aspartate is first activated by ATP to form Asp-AMP and then transferred to the acceptor end of tRNA(Asp/Asn). The polypeptide is Aspartate--tRNA(Asp/Asn) ligase (Methanoculleus marisnigri (strain ATCC 35101 / DSM 1498 / JR1)).